Reading from the N-terminus, the 324-residue chain is MKPSVILYKALPDDLLQRLQEHFTVHQVANLSPQTIEQNAAIFAEAEGLLGSNENVDAALLGKMPKLRATSTISVGYDNFDVDALTARKILLMHTPTVLTETVADTLMALVLSTARRVVEVAERVKAGEWTASIGPDWYGTDVHHKTLGIVGMGRIGMALAQRAHFGFNMPILYNARRHHKEAEERFNARYCDLDSLLQESDFVCLILPLTDETYHLFGAEQFGKMKSSAIFINAGRGPVVDENALIAALQKGEIHAAGLDVFEQEPLSVDSPLLSMANVVAVPHIGSATHETRYGMAACAVDNLIDALQGKVEKNCVNPHVAD.

Active-site residues include R237 and E266. The active-site Proton donor is the H285.

The protein belongs to the D-isomer specific 2-hydroxyacid dehydrogenase family. GhrB subfamily. As to quaternary structure, homodimer.

It is found in the cytoplasm. It catalyses the reaction glycolate + NADP(+) = glyoxylate + NADPH + H(+). The catalysed reaction is (R)-glycerate + NAD(+) = 3-hydroxypyruvate + NADH + H(+). It carries out the reaction (R)-glycerate + NADP(+) = 3-hydroxypyruvate + NADPH + H(+). Functionally, catalyzes the NADPH-dependent reduction of glyoxylate and hydroxypyruvate into glycolate and glycerate, respectively. The polypeptide is Glyoxylate/hydroxypyruvate reductase B (Escherichia coli O17:K52:H18 (strain UMN026 / ExPEC)).